The primary structure comprises 660 residues: Sodium/nucleoside cotransporter 2 (660 aa).

Phosphoserine is present on Ser-46. The next 14 helical transmembrane spans lie at 82–102 (ILLGLLCLAYAAYFLAACILN), 106–125 (ALALFVITCLVIFILACHFL), 150–168 (KRVFVGLSVVGLILWLALD), 174–194 (EQLISFAGICMFILILFACSK), 202–222 (RTVFWGLGLQFIFGILVIRTE), 235–255 (IQIFLAYTVEGSSFVFGDTLV), 262–282 (QSLPIIIFFGCVMSILYYLGL), 297–316 (TMGTTAAETLAVAGNIFVGM), 338–357 (VMTGGFATIAGTVLGAFISF), 364–383 (LISASVMAAPCALALSKLVY), 425–445 (VAANLIAFLAVLAFINATLSW), 456–476 (SFQVICSYVLRPMVFMMGVQW), 531–551 (TTFSLCGFANLSSIGITLGGL), and 569–589 (ALFTGACVSFISACMAGILYV).

The protein belongs to the concentrative nucleoside transporter (CNT) (TC 2.A.41) family.

Its subcellular location is the membrane. The protein resides in the apicolateral cell membrane. The catalysed reaction is adenosine(out) + Na(+)(out) = adenosine(in) + Na(+)(in). It carries out the reaction inosine(out) + Na(+)(out) = inosine(in) + Na(+)(in). The enzyme catalyses guanosine(out) + Na(+)(out) = guanosine(in) + Na(+)(in). It catalyses the reaction uridine(out) + Na(+)(out) = uridine(in) + Na(+)(in). Sodium-dependent and purine-selective transporter. Exhibits the transport characteristics of the nucleoside transport system cif or N1 subtype (N1/cif) (selective for purine nucleosides and uridine). Plays a critical role in specific uptake and salvage of purine nucleosides in kidney and other tissues. May contribute to regulate the transport of organic compounds in testes across the blood-testis-barrier. The sequence is that of Sodium/nucleoside cotransporter 2 (Slc28a2) from Mus musculus (Mouse).